We begin with the raw amino-acid sequence, 225 residues long: Ribosomal RNA large subunit methyltransferase E (225 aa).

S-adenosyl-L-methionine is bound by residues Gly-64, Trp-66, Asp-93, Asp-109, and Asp-138. The active-site Proton acceptor is the Lys-178.

The protein belongs to the class I-like SAM-binding methyltransferase superfamily. RNA methyltransferase RlmE family.

The protein resides in the cytoplasm. The catalysed reaction is uridine(2552) in 23S rRNA + S-adenosyl-L-methionine = 2'-O-methyluridine(2552) in 23S rRNA + S-adenosyl-L-homocysteine + H(+). Functionally, specifically methylates the uridine in position 2552 of 23S rRNA at the 2'-O position of the ribose in the fully assembled 50S ribosomal subunit. This Cupriavidus pinatubonensis (strain JMP 134 / LMG 1197) (Cupriavidus necator (strain JMP 134)) protein is Ribosomal RNA large subunit methyltransferase E.